A 423-amino-acid chain; its full sequence is Imidazolonepropionase (423 aa).

Residues histidine 78 and histidine 80 each contribute to the Fe(3+) site. Zn(2+) contacts are provided by histidine 78 and histidine 80. The 4-imidazolone-5-propanoate site is built by arginine 87, tyrosine 150, and histidine 183. Tyrosine 150 is an N-formimidoyl-L-glutamate binding site. Fe(3+) is bound at residue histidine 247. Position 247 (histidine 247) interacts with Zn(2+). A 4-imidazolone-5-propanoate-binding site is contributed by glutamate 250. Residue aspartate 322 coordinates Fe(3+). Position 322 (aspartate 322) interacts with Zn(2+). N-formimidoyl-L-glutamate-binding residues include asparagine 324 and glycine 326. Serine 327 contacts 4-imidazolone-5-propanoate.

It belongs to the metallo-dependent hydrolases superfamily. HutI family. Zn(2+) serves as cofactor. Fe(3+) is required as a cofactor.

It is found in the cytoplasm. The catalysed reaction is 4-imidazolone-5-propanoate + H2O = N-formimidoyl-L-glutamate. Its pathway is amino-acid degradation; L-histidine degradation into L-glutamate; N-formimidoyl-L-glutamate from L-histidine: step 3/3. Catalyzes the hydrolytic cleavage of the carbon-nitrogen bond in imidazolone-5-propanoate to yield N-formimidoyl-L-glutamate. It is the third step in the universal histidine degradation pathway. In Bacillus cereus (strain ATCC 10987 / NRS 248), this protein is Imidazolonepropionase.